The primary structure comprises 217 residues: Carbon disulfide hydrolase (217 aa).

Cys-39, His-98, and Cys-101 together coordinate Zn(2+). The interval 192–217 (DKEKRARTDCTPTPYGVKGNQPPRWK) is disordered.

This sequence belongs to the beta-class carbonic anhydrase family. In terms of assembly, forms only homooctamers in solution. The cofactor is Zn(2+).

The enzyme catalyses carbon disulfide + 2 H2O = 2 hydrogen sulfide + CO2 + 2 H(+). It functions in the pathway sulfur metabolism; hydrogen sulfide biosynthesis. Catalyzes the conversion of carbon disulfide into hydrogen sulfide and carbon dioxide, with carbonyl sulfide as an intermediate. Likely plays a key role in sulfur metabolism that allows A.thiooxidans S1p to grow on carbon disulfide as the main carbon and energy source. Does not show carbonic anhydrase activity (hydration of CO(2) to carbonate). The protein is Carbon disulfide hydrolase of Acidithiobacillus thiooxidans (Thiobacillus thiooxidans).